Consider the following 65-residue polypeptide: Large ribosomal subunit protein bL35 (65 aa).

This sequence belongs to the bacterial ribosomal protein bL35 family.

The chain is Large ribosomal subunit protein bL35 from Clostridium botulinum (strain Loch Maree / Type A3).